The following is a 43-amino-acid chain: Protein PsbN (43 aa).

The helical transmembrane segment at 7–27 (LVVAIAAITICITAFAIYTAF) threads the bilayer.

The protein belongs to the PsbN family.

It is found in the cellular thylakoid membrane. May play a role in photosystem I and II biogenesis. This Synechococcus sp. (strain JA-3-3Ab) (Cyanobacteria bacterium Yellowstone A-Prime) protein is Protein PsbN.